We begin with the raw amino-acid sequence, 366 residues long: MSLYIGLMSGTSMDGIDAALLELPSNQLIHGITKQYSDDVRRNLDNLIMGNHLTLASICQLNTLIGREFAEAVRQLLIEIKVHPKEIQAIGSHGQTVCHDTSGSIPYTLQLGCGHTISSLTGITVVADFRTRDLVNGGQGAPFAPLYHQQIFSKVNESVAVVNIGGIANVTFIAKNQMTRGWDIGPGNCLMDAWIYKNKGALFDKSGVWASQGEVIHPLLEYLLQDPFFHLDSPKSIGKEYFSLSWLQKHLKPDYTPADIQATLLALTAHTIAETILNESGEIKQLYLCGGGAHNTHLKENLARLLPGIAVKSIVELGISPDYLEAMMFAWLAAQTINQIPVNLTSITGAKSIAILGAVYPIIKSY.

Position 10–17 (G10–D17) interacts with ATP.

The protein belongs to the anhydro-N-acetylmuramic acid kinase family.

It catalyses the reaction 1,6-anhydro-N-acetyl-beta-muramate + ATP + H2O = N-acetyl-D-muramate 6-phosphate + ADP + H(+). The protein operates within amino-sugar metabolism; 1,6-anhydro-N-acetylmuramate degradation. It functions in the pathway cell wall biogenesis; peptidoglycan recycling. Its function is as follows. Catalyzes the specific phosphorylation of 1,6-anhydro-N-acetylmuramic acid (anhMurNAc) with the simultaneous cleavage of the 1,6-anhydro ring, generating MurNAc-6-P. Is required for the utilization of anhMurNAc either imported from the medium or derived from its own cell wall murein, and thus plays a role in cell wall recycling. This chain is Anhydro-N-acetylmuramic acid kinase, found in Legionella pneumophila (strain Lens).